Here is a 198-residue protein sequence, read N- to C-terminus: ATP-dependent Clp protease proteolytic subunit (198 aa).

S98 functions as the Nucleophile in the catalytic mechanism. H123 is an active-site residue.

This sequence belongs to the peptidase S14 family. In terms of assembly, fourteen ClpP subunits assemble into 2 heptameric rings which stack back to back to give a disk-like structure with a central cavity, resembling the structure of eukaryotic proteasomes.

The protein resides in the cytoplasm. It carries out the reaction Hydrolysis of proteins to small peptides in the presence of ATP and magnesium. alpha-casein is the usual test substrate. In the absence of ATP, only oligopeptides shorter than five residues are hydrolyzed (such as succinyl-Leu-Tyr-|-NHMec, and Leu-Tyr-Leu-|-Tyr-Trp, in which cleavage of the -Tyr-|-Leu- and -Tyr-|-Trp bonds also occurs).. Functionally, cleaves peptides in various proteins in a process that requires ATP hydrolysis. Has a chymotrypsin-like activity. Plays a major role in the degradation of misfolded proteins. This chain is ATP-dependent Clp protease proteolytic subunit, found in Listeria monocytogenes serovar 1/2a (strain ATCC BAA-679 / EGD-e).